Here is a 336-residue protein sequence, read N- to C-terminus: HTH-type transcriptional repressor PurR (336 aa).

The HTH lacI-type domain maps to 2-56 (ATIKDVARLAGVSTTTVSHVINKTRFVAETTQEKVMEAVKQLNYAPSAVARSLKC). The H-T-H motif DNA-binding region spans 4-23 (IKDVARLAGVSTTTVSHVIN). The DNA-binding element occupies 48-56 (SAVARSLKC). 4 residues coordinate hypoxanthine: phenylalanine 73, lysine 189, phenylalanine 220, and aspartate 274.

In terms of assembly, homodimer.

It functions in the pathway purine metabolism; purine nucleotide biosynthesis [regulation]. Its function is as follows. Is the main repressor of the genes involved in the de novo synthesis of purine nucleotides, regulating purB, purC, purEK, purF, purHD, purL, purMN and guaBA expression. PurR is allosterically activated to bind its cognate DNA by binding the purine corepressors, hypoxanthine or guanine, thereby effecting transcription repression. The polypeptide is HTH-type transcriptional repressor PurR (Vibrio cholerae serotype O1 (strain ATCC 39315 / El Tor Inaba N16961)).